Reading from the N-terminus, the 721-residue chain is 1,4-alpha-glucan branching enzyme GlgB (721 aa).

Catalysis depends on Asp400, which acts as the Nucleophile. Catalysis depends on Glu453, which acts as the Proton donor.

This sequence belongs to the glycosyl hydrolase 13 family. GlgB subfamily. As to quaternary structure, monomer.

The enzyme catalyses Transfers a segment of a (1-&gt;4)-alpha-D-glucan chain to a primary hydroxy group in a similar glucan chain.. The protein operates within glycan biosynthesis; glycogen biosynthesis. Catalyzes the formation of the alpha-1,6-glucosidic linkages in glycogen by scission of a 1,4-alpha-linked oligosaccharide from growing alpha-1,4-glucan chains and the subsequent attachment of the oligosaccharide to the alpha-1,6 position. This Chlamydia felis (strain Fe/C-56) (Chlamydophila felis) protein is 1,4-alpha-glucan branching enzyme GlgB.